A 659-amino-acid polypeptide reads, in one-letter code: 1,4-alpha-glucan branching enzyme GlgB 2 (659 aa).

A disordered region spans residues 1–26 (MRNYKELKHEKNGNVTEKIGENKGKS). Aspartate 337 acts as the Nucleophile in catalysis. Catalysis depends on glutamate 390, which acts as the Proton donor.

Belongs to the glycosyl hydrolase 13 family. GlgB subfamily. In terms of assembly, monomer.

It carries out the reaction Transfers a segment of a (1-&gt;4)-alpha-D-glucan chain to a primary hydroxy group in a similar glucan chain.. It functions in the pathway glycan biosynthesis; glycogen biosynthesis. Functionally, catalyzes the formation of the alpha-1,6-glucosidic linkages in glycogen by scission of a 1,4-alpha-linked oligosaccharide from growing alpha-1,4-glucan chains and the subsequent attachment of the oligosaccharide to the alpha-1,6 position. This Clostridium perfringens (strain SM101 / Type A) protein is 1,4-alpha-glucan branching enzyme GlgB 2.